The following is a 1779-amino-acid chain: Collagen alpha-1(IV) chain (1779 aa).

The signal sequence occupies residues 1–23 (MLPFWKRLLYAAVIAGALVGADA). Asn-72 carries an N-linked (GlcNAc...) asparagine glycan. Disordered regions lie at residues 89–643 (GNRG…KPAL), 655–1187 (DKGY…LPGL), 1200–1285 (TGAP…IGPR), and 1336–1530 (GLPG…RGYE). Residues 144–163 (QAGVPGVQGPAGNPGAPGIN) are compositionally biased toward low complexity. Composition is skewed to basic and acidic residues over residues 196-217 (KGEKGEPAKENGDYAKGEKGEP) and 249-259 (PRGEHGLKGEK). Positions 360-369 (PGLNGLPGNP) are enriched in low complexity. Over residues 434-443 (GQKGGAGLPG) the composition is skewed to gly residues. Over residues 531–545 (GRPGTPGAAGAPGQK) the composition is skewed to low complexity. A compositionally biased stretch (basic and acidic residues) spans 724–747 (PGFHGRDGAKGDKGSFGRSGEKGE). 2 stretches are compositionally biased toward low complexity: residues 913 to 931 (VGPIGPAGVAGPPGVPGID) and 1015 to 1036 (PGLMGIKGDQGLAGAPGQQGLD). Over residues 1106–1127 (EKGDQGRSGIDGRDGINGEKGE) the composition is skewed to basic and acidic residues. A compositionally biased stretch (low complexity) spans 1151–1170 (APGMDGLPGAAGAPGAVGYP). Basic and acidic residues-rich tracts occupy residues 1224 to 1245 (IRGDKGSQGERGYTGEKGEQGE), 1496 to 1505 (ERGEKGERGL), and 1517 to 1529 (PKGDRGEPGERGY). Residues 1555-1778 (GILITRHSQS…SRCQVCMKNS (224 aa)) enclose the Collagen IV NC1 domain. Cystine bridges form between Cys-1570-Cys-1659, Cys-1603-Cys-1656, Cys-1615-Cys-1621, Cys-1678-Cys-1774, Cys-1712-Cys-1771, and Cys-1724-Cys-1731.

This sequence belongs to the type IV collagen family. In terms of assembly, trimers of two alpha 1(IV) and one alpha 2(IV) chain. Type IV collagen forms a mesh-like network linked through intermolecular interactions between 7S domains and between NC1 domains. Post-translationally, prolines at the third position of the tripeptide repeating unit (G-X-Y) are hydroxylated in some or all of the chains. In terms of processing, type IV collagens contain numerous cysteine residues which are involved in inter- and intramolecular disulfide bonding. 12 of these, located in the NC1 domain, are conserved in all known type IV collagens.

Its subcellular location is the secreted. The protein resides in the extracellular space. It localises to the extracellular matrix. The protein localises to the basement membrane. Its function is as follows. Collagen type IV is specific for basement membranes. This chain is Collagen alpha-1(IV) chain, found in Drosophila melanogaster (Fruit fly).